Reading from the N-terminus, the 313-residue chain is Testis-expressed protein 264 (313 aa).

Over 1-6 (MSDLLL) the chain is Lumenal. A helical; Signal-anchor for type III membrane protein membrane pass occupies residues 7 to 31 (LGLIGGLTLLLLLTLLAFAGYSGLL). The Cytoplasmic portion of the chain corresponds to 32-313 (AGVEVSAGSP…EPTAPEKGKE (282 aa)). The interval 193–313 (PEMKETEWKW…EPTAPEKGKE (121 aa)) is disordered. Residues 219 to 247 (DTMSDTSSVSLEVSPGSRETSAATLSPGA) are compositionally biased toward polar residues. A phosphoserine mark is found at S239 and S244. The segment covering 251–263 (GWDDGDTRSEHSY) has biased composition (basic and acidic residues). A compositionally biased stretch (low complexity) spans 264 to 273 (SESGASGSSF). Residues 273 to 276 (FEEL) carry the LIR motif motif.

Interacts (via the LIR motif) with ATG8 family proteins MAP1LC3A, MAP1LC3B, GABARAP and GABARAPL1. Interacts with VCP/p97; bridging VCP/p97 to covalent DNA-protein cross-links (DPCs). Interacts with TOP1 (when sumoylated).

It localises to the endoplasmic reticulum membrane. It is found in the cytoplasmic vesicle. Its subcellular location is the autophagosome. The protein resides in the cytoplasm. The protein localises to the cytosol. It localises to the nucleus. It is found in the chromosome. Functionally, major reticulophagy (also called ER-phagy) receptor that acts independently of other candidate reticulophagy receptors to remodel subdomains of the endoplasmic reticulum into autophagosomes upon nutrient stress, which then fuse with lysosomes for endoplasmic reticulum turnover. The ATG8-containing isolation membrane (IM) cradles a tubular segment of TEX264-positive ER near a three-way junction, allowing the formation of a synapse of 2 juxtaposed membranes with trans interaction between the TEX264 and ATG8 proteins. Expansion of the IM would extend the capture of ER, possibly through a 'zipper-like' process involving continued trans TEX264-ATG8 interactions, until poorly understood mechanisms lead to the fission of relevant membranes and, ultimately, autophagosomal membrane closure. Also involved in the repair of covalent DNA-protein cross-links (DPCs) during DNA synthesis: acts by bridging VCP/p97 to covalent DNA-protein cross-links (DPCs) and initiating resolution of DPCs by SPRTN. This is Testis-expressed protein 264 from Homo sapiens (Human).